We begin with the raw amino-acid sequence, 832 residues long: Protein P (832 aa).

Residues 1-177 (MPLSYQHFRR…FCGSPYSWEQ (177 aa)) form a terminal protein domain (TP) region. Residues 178-335 (ELQHGAESFH…YCLSHIVNLL (158 aa)) form a spacer region. Residues 241–263 (RRPFGVEPSGSGHTTNLASKSAS) are disordered. Positions 251–263 (SGHTTNLASKSAS) are enriched in polar residues. Residues 336–679 (EDWGPCAEHG…YLNLYPVARQ (344 aa)) form a polymerase/reverse transcriptase domain (RT) region. Positions 346–589 (EHHIRIPRTP…YSLHFMGYVI (244 aa)) constitute a Reverse transcriptase domain. D418, D540, and D541 together coordinate Mg(2+).

This sequence belongs to the hepadnaviridae P protein family.

The catalysed reaction is DNA(n) + a 2'-deoxyribonucleoside 5'-triphosphate = DNA(n+1) + diphosphate. It catalyses the reaction Endonucleolytic cleavage to 5'-phosphomonoester.. Activated by host HSP70 and HSP40 in vitro to be able to bind the epsilon loop of the pgRNA. Because deletion of the RNase H region renders the protein partly chaperone-independent, the chaperones may be needed indirectly to relieve occlusion of the RNA-binding site by this domain. Inhibited by several reverse-transcriptase inhibitors: Lamivudine, Adefovir and Entecavir. In terms of biological role, multifunctional enzyme that converts the viral RNA genome into dsDNA in viral cytoplasmic capsids. This enzyme displays a DNA polymerase activity that can copy either DNA or RNA templates, and a ribonuclease H (RNase H) activity that cleaves the RNA strand of RNA-DNA heteroduplexes in a partially processive 3'- to 5'-endonucleasic mode. Neo-synthesized pregenomic RNA (pgRNA) are encapsidated together with the P protein, and reverse-transcribed inside the nucleocapsid. Initiation of reverse-transcription occurs first by binding the epsilon loop on the pgRNA genome, and is initiated by protein priming, thereby the 5'-end of (-)DNA is covalently linked to P protein. Partial (+)DNA is synthesized from the (-)DNA template and generates the relaxed circular DNA (RC-DNA) genome. After budding and infection, the RC-DNA migrates in the nucleus, and is converted into a plasmid-like covalently closed circular DNA (cccDNA). The activity of P protein does not seem to be necessary for cccDNA generation, and is presumably released from (+)DNA by host nuclear DNA repair machinery. This Homo sapiens (Human) protein is Protein P.